Reading from the N-terminus, the 318-residue chain is Pantothenate kinase (318 aa).

Residue 96–103 coordinates ATP; it reads GSVAVGKS.

Belongs to the prokaryotic pantothenate kinase family.

It localises to the cytoplasm. It catalyses the reaction (R)-pantothenate + ATP = (R)-4'-phosphopantothenate + ADP + H(+). It participates in cofactor biosynthesis; coenzyme A biosynthesis; CoA from (R)-pantothenate: step 1/5. The polypeptide is Pantothenate kinase (Rhodopseudomonas palustris (strain BisB5)).